A 622-amino-acid polypeptide reads, in one-letter code: Mitochondrial Rho GTPase 2 (622 aa).

Over 1–596 (MRRDVRILLL…ELHPTPFWLR (596 aa)) the chain is Cytoplasmic. Positions 2–168 (RRDVRILLLG…FYYAQKAVLH (167 aa)) constitute a Miro 1 domain. GTP-binding residues include G16, K17, T18, and S19. T18 provides a ligand contact to Mg(2+). D57 is a Mg(2+) binding site. S59 serves as a coordination point for GTP. Residue K96 forms a Glycyl lysine isopeptide (Lys-Gly) (interchain with G-Cter in ubiquitin) linkage. GTP-binding residues include N118, K119, D121, A149, and K150. Residue K119 forms a Glycyl lysine isopeptide (Lys-Gly) (interchain with G-Cter in ubiquitin) linkage. Residue K164 forms a Glycyl lysine isopeptide (Lys-Gly) (interchain with G-Cter in ubiquitin) linkage. EF-hand domains follow at residues 184-219 (ACAQ…CFGH) and 304-339 (RGYQ…FSVA). D197, D199, D201, E208, D317, D319, D321, and E328 together coordinate Ca(2+). Residues 415 to 580 (RSVLMCKVLG…FTQLATMATF (166 aa)) form the Miro 2 domain. Residues G427, G429, K430, S431, and A432 each coordinate GTP. S431 is a Mg(2+) binding site. E475 lines the Mg(2+) pocket. Residues K529, D531, and C560 each contribute to the GTP site. The helical; Anchor for type IV membrane protein transmembrane segment at 597 to 619 (GVLVAVGTAVAAVLSFSLYRVLV) threads the bilayer. The Mitochondrial intermembrane portion of the chain corresponds to 620–622 (KSR).

It belongs to the mitochondrial Rho GTPase family. As to quaternary structure, homodimer. Interacts with the kinesin-binding proteins TRAK1/OIP106 and TRAK2/GRIF1, forming a link between mitochondria and the trafficking apparatus of the microtubules. Interacts with ARMCX3. Found in a complex with KIF5B, OGT, RHOT1 and TRAK1. Post-translationally, ubiquitinated by PRKN in a PINK1-dependent manner, leading to its degradation.

It is found in the mitochondrion outer membrane. The enzyme catalyses GTP + H2O = GDP + phosphate + H(+). The catalysed reaction is ATP + H2O = ADP + phosphate + H(+). It carries out the reaction UTP + H2O = UDP + phosphate + H(+). In terms of biological role, atypical mitochondrial nucleoside-triphosphatase (NTPase) involved in mitochondrial trafficking. Probably involved in control of anterograde transport of mitochondria and their subcellular distribution. Can hydrolyze GTP, ATP and UTP. The protein is Mitochondrial Rho GTPase 2 (Rhot2) of Rattus norvegicus (Rat).